A 432-amino-acid chain; its full sequence is Adenosylmethionine-8-amino-7-oxononanoate aminotransferase (432 aa).

Trp52 provides a ligand contact to substrate. A pyridoxal 5'-phosphate-binding site is contributed by 112–113 (GS). Tyr144 provides a ligand contact to substrate. Asp245 is a pyridoxal 5'-phosphate binding site. Residues Lys274 and Gly307 each coordinate substrate. Lys274 carries the post-translational modification N6-(pyridoxal phosphate)lysine. 308 to 309 (PT) lines the pyridoxal 5'-phosphate pocket. Arg391 lines the substrate pocket.

The protein belongs to the class-III pyridoxal-phosphate-dependent aminotransferase family. BioA subfamily. In terms of assembly, homodimer. Pyridoxal 5'-phosphate serves as cofactor.

The protein localises to the cytoplasm. It carries out the reaction (8S)-8-amino-7-oxononanoate + S-adenosyl-L-methionine = S-adenosyl-4-methylsulfanyl-2-oxobutanoate + (7R,8S)-7,8-diammoniononanoate. It participates in cofactor biosynthesis; biotin biosynthesis; 7,8-diaminononanoate from 8-amino-7-oxononanoate (SAM route): step 1/1. Functionally, catalyzes the transfer of the alpha-amino group from S-adenosyl-L-methionine (SAM) to 7-keto-8-aminopelargonic acid (KAPA) to form 7,8-diaminopelargonic acid (DAPA). It is the only aminotransferase known to utilize SAM as an amino donor. In Buchnera aphidicola subsp. Schizaphis graminum (strain Sg), this protein is Adenosylmethionine-8-amino-7-oxononanoate aminotransferase.